The sequence spans 137 residues: Small heat shock protein IbpA (137 aa).

One can recognise a sHSP domain in the interval 28–137 (SQSNGGYPPY…ANKPRRIEIN (110 aa)).

It belongs to the small heat shock protein (HSP20) family. As to quaternary structure, monomer. Forms homomultimers of about 100-150 subunits at optimal growth temperatures. Conformation changes to monomers at high temperatures or high ionic concentrations.

The protein localises to the cytoplasm. In terms of biological role, associates with aggregated proteins, together with IbpB, to stabilize and protect them from irreversible denaturation and extensive proteolysis during heat shock and oxidative stress. Aggregated proteins bound to the IbpAB complex are more efficiently refolded and reactivated by the ATP-dependent chaperone systems ClpB and DnaK/DnaJ/GrpE. Its activity is ATP-independent. This Citrobacter koseri (strain ATCC BAA-895 / CDC 4225-83 / SGSC4696) protein is Small heat shock protein IbpA.